Consider the following 465-residue polypeptide: Cysteine--tRNA ligase (465 aa).

Residue cysteine 27 coordinates Zn(2+). A 'HIGH' region motif is present at residues 29–39 (PTVYDDAHLGH). The Zn(2+) site is built by cysteine 207, histidine 237, and glutamate 241. A 'KMSKS' region motif is present at residues 269-273 (KMSKS). Lysine 272 is a binding site for ATP.

It belongs to the class-I aminoacyl-tRNA synthetase family. Monomer. Requires Zn(2+) as cofactor.

It localises to the cytoplasm. It catalyses the reaction tRNA(Cys) + L-cysteine + ATP = L-cysteinyl-tRNA(Cys) + AMP + diphosphate. The sequence is that of Cysteine--tRNA ligase from Helicobacter pylori (strain Shi470).